Reading from the N-terminus, the 207-residue chain is Sodium/potassium-transporting ATPase subunit beta-1-interacting protein 1 (207 aa).

The next 3 helical transmembrane spans lie at 2-22, 35-55, and 62-82; these read GRCSGRCTLVGICCLQLAAAL, APILANFLHIMVVILGILGTL, and LILYSIWLALWVAWNAFIICF. Asparagine 100 carries an N-linked (GlcNAc...) asparagine glycan. Residues 147 to 167 traverse the membrane as a helical segment; sequence ALSSALQIFLALFGFVYACYV.

It belongs to the NKAIN family. Interacts with atp1b1 C-terminus.

The protein resides in the cell membrane. In Xenopus laevis (African clawed frog), this protein is Sodium/potassium-transporting ATPase subunit beta-1-interacting protein 1 (nkain1).